The primary structure comprises 178 residues: UPF0228 protein MA_4223 (178 aa).

It belongs to the UPF0228 family.

The protein is UPF0228 protein MA_4223 of Methanosarcina acetivorans (strain ATCC 35395 / DSM 2834 / JCM 12185 / C2A).